Reading from the N-terminus, the 454-residue chain is Cerebellar degeneration-related protein 2 (454 aa).

2 coiled-coil regions span residues 44–142 (ELED…SGQG) and 192–265 (EEEN…QSEH). The tract at residues 134-153 (EELKSSGQGRRSPGKCDQEK) is disordered. Ser-311 carries the phosphoserine modification. Residues 346–380 (LHEVDTQYSALKVKYEELLKKCQEEQDSLSHKAVQ) adopt a coiled-coil conformation.

This sequence belongs to the CDR2 family.

In Homo sapiens (Human), this protein is Cerebellar degeneration-related protein 2 (CDR2).